The primary structure comprises 989 residues: ATP-dependent 6-phosphofructokinase subunit alpha (989 aa).

An N-terminal catalytic PFK domain 1 region spans residues 1–585; sequence MPEPSISDLS…SYENFLSVSK (585 aa). Residues glycine 220, 283–284, and 313–316 each bind ATP; these read RC and GDGS. Aspartate 314 serves as a coordination point for Mg(2+). Beta-D-fructose 6-phosphate is bound by residues 359–361, arginine 396, 403–405, glutamate 460, arginine 487, and 493–496; these read SID, MGR, and HVQR. Aspartate 361 serves as the catalytic Proton acceptor. The interdomain linker stretch occupies residues 586 to 599; it reads YDDGSYLVPESSRL. Residues 600 to 989 are C-terminal regulatory PFK domain 2; sequence NIAIIHVGAP…LSGRLSIRTT (390 aa). Beta-D-fructose 2,6-bisphosphate contacts are provided by residues arginine 670, 727–731, arginine 765, 772–774, glutamate 832, arginine 858, 864–867, and arginine 963; these read TVSNN, QGG, and HVQQ.

Belongs to the phosphofructokinase type A (PFKA) family. ATP-dependent PFK group I subfamily. Eukaryotic two domain clade 'E' sub-subfamily. In terms of assembly, heterododecamer of 4 alpha, 4 beta and 4 gamma chains. Mg(2+) is required as a cofactor.

Its subcellular location is the cytoplasm. The catalysed reaction is beta-D-fructose 6-phosphate + ATP = beta-D-fructose 1,6-bisphosphate + ADP + H(+). Its pathway is carbohydrate degradation; glycolysis; D-glyceraldehyde 3-phosphate and glycerone phosphate from D-glucose: step 3/4. Its activity is regulated as follows. Allosterically activated by ADP, AMP, or fructose 2,6-bisphosphate, and allosterically inhibited by ATP or citrate. Functionally, catalyzes the phosphorylation of D-fructose 6-phosphate to fructose 1,6-bisphosphate by ATP, the first committing step of glycolysis. The chain is ATP-dependent 6-phosphofructokinase subunit alpha (PFK1) from Komagataella pastoris (Yeast).